A 102-amino-acid chain; its full sequence is Small ribosomal subunit protein uS10 (102 aa).

The protein belongs to the universal ribosomal protein uS10 family. In terms of assembly, part of the 30S ribosomal subunit.

Involved in the binding of tRNA to the ribosomes. This is Small ribosomal subunit protein uS10 from Desulfitobacterium hafniense (strain DSM 10664 / DCB-2).